The sequence spans 256 residues: Cysteine-rich repeat secretory protein 29 (256 aa).

An N-terminal signal peptide occupies residues 1-26 (MSSVFGSVHILAMIAIQLLLIHSVSS). Gnk2-homologous domains are found at residues 33–136 (YLHH…SVAS) and 142–253 (YEND…LYPF).

It belongs to the cysteine-rich repeat secretory protein family.

It localises to the secreted. The protein is Cysteine-rich repeat secretory protein 29 (CRRSP29) of Arabidopsis thaliana (Mouse-ear cress).